The sequence spans 160 residues: Protein max (160 aa).

A compositionally biased stretch (acidic residues) spans 1-13; the sequence is MSDNDDIEVESDE. The segment at 1-40 is disordered; it reads MSDNDDIEVESDEEQPRFQSAADKRAHHNALERKRRDHIK. Position 2 is an N-acetylserine (S2). Phosphoserine occurs at positions 2 and 11. A bHLH domain is found at 23-74; it reads DKRAHHNALERKRRDHIKDSFHSLRDSVPSLQGEKASRAQILDKATEYIQYM. The segment covering 29 to 40 has biased composition (basic and acidic residues); that stretch reads NALERKRRDHIK. At K66 the chain carries N6-acetyllysine. The interval 81–102 is leucine-zipper; sequence HQQDIDDLKRQNALLEQQVRAL. Residues 104 to 160 form a disordered region; it reads KARSSAQLQTNYPSSDNSLYTNAKGGTISAFDGGSDSSSESEPEEPQSRKKLRMEAS. Phosphoserine is present on S107. Over residues 107-124 the composition is skewed to polar residues; sequence SSAQLQTNYPSSDNSLYT. N6-acetyllysine occurs at positions 153 and 154.

This sequence belongs to the MAX family. As to quaternary structure, efficient DNA binding requires dimerization with another bHLH protein. Binds DNA as a heterodimer with MYC or MAD. Part of the E2F6.com-1 complex in G0 phase composed of E2F6, MGA, MAX, TFDP1, CBX3, BAT8, EUHMTASE1, RING1, RNF2, MBLR, L3MBTL2 and YAF2. Component of some MLL1/MLL complex, at least composed of the core components KMT2A/MLL1, ASH2L, HCFC1/HCF1, WDR5 and RBBP5, as well as the facultative components BACC1, CHD8, E2F6, HSP70, INO80C, KANSL1, LAS1L, MAX, MCRS1, MGA, MYST1/MOF, PELP1, PHF20, PRP31, RING2, RUVB1/TIP49A, RUVB2/TIP49B, SENP3, TAF1, TAF4, TAF6, TAF7, TAF9 and TEX10. Interacts with SPAG9. The heterodimer MYC:MAX interacts with ABI1; the interaction may enhance MYC:MAX transcriptional activity. Post-translationally, phosphorylated.

The protein localises to the nucleus. It localises to the cell projection. The protein resides in the dendrite. In terms of biological role, transcription regulator. Forms a sequence-specific DNA-binding protein complex with MYC or MAD which recognizes the core sequence 5'-CAC[GA]TG-3'. The MYC:MAX complex is a transcriptional activator, whereas the MAD:MAX complex is a repressor. CpG methylation of the recognition site greatly inhibits DNA binding, suggesting that DNA methylation may regulate the MYC:MAX complex in vivo. May repress transcription via the recruitment of a chromatin remodeling complex containing H3 'Lys-9' histone methyltransferase activity. Represses MYC transcriptional activity from E-box elements. This chain is Protein max, found in Mus musculus (Mouse).